The chain runs to 369 residues: Small ribosomal subunit biogenesis GTPase RsgA (369 aa).

A CP-type G domain is found at 116 to 271 (GEQLIAANLD…LIDNPGIREI (156 aa)). Residues 161 to 164 (NKID) and 213 to 221 (GSSGVGKST) each bind GTP. The Zn(2+) site is built by C294, C299, H301, and C307.

It belongs to the TRAFAC class YlqF/YawG GTPase family. RsgA subfamily. In terms of assembly, monomer. Associates with 30S ribosomal subunit, binds 16S rRNA. Requires Zn(2+) as cofactor.

Its subcellular location is the cytoplasm. One of several proteins that assist in the late maturation steps of the functional core of the 30S ribosomal subunit. Helps release RbfA from mature subunits. May play a role in the assembly of ribosomal proteins into the subunit. Circularly permuted GTPase that catalyzes slow GTP hydrolysis, GTPase activity is stimulated by the 30S ribosomal subunit. This chain is Small ribosomal subunit biogenesis GTPase RsgA, found in Methanosarcina acetivorans (strain ATCC 35395 / DSM 2834 / JCM 12185 / C2A).